Consider the following 694-residue polypeptide: Elongation factor G (694 aa).

Residues 6–288 (KLYRNIGIAA…GVIEYLPSPT (283 aa)) form the tr-type G domain. GTP-binding positions include 15-22 (AHVDAGKT), 86-90 (DTPGH), and 140-143 (NKMD).

It belongs to the TRAFAC class translation factor GTPase superfamily. Classic translation factor GTPase family. EF-G/EF-2 subfamily.

The protein resides in the cytoplasm. In terms of biological role, catalyzes the GTP-dependent ribosomal translocation step during translation elongation. During this step, the ribosome changes from the pre-translocational (PRE) to the post-translocational (POST) state as the newly formed A-site-bound peptidyl-tRNA and P-site-bound deacylated tRNA move to the P and E sites, respectively. Catalyzes the coordinated movement of the two tRNA molecules, the mRNA and conformational changes in the ribosome. The protein is Elongation factor G of Legionella pneumophila (strain Lens).